The following is a 246-amino-acid chain: NH(3)-dependent NAD(+) synthetase (246 aa).

29–36 (GLSGGIDS) serves as a coordination point for ATP. Aspartate 35 contacts Mg(2+). Position 110 (arginine 110) interacts with deamido-NAD(+). Threonine 130 lines the ATP pocket. Glutamate 135 contacts Mg(2+). Lysine 159 and serine 181 together coordinate ATP.

The protein belongs to the NAD synthetase family. Homodimer.

It catalyses the reaction deamido-NAD(+) + NH4(+) + ATP = AMP + diphosphate + NAD(+) + H(+). It functions in the pathway cofactor biosynthesis; NAD(+) biosynthesis; NAD(+) from deamido-NAD(+) (ammonia route): step 1/1. Its function is as follows. Catalyzes the ATP-dependent amidation of deamido-NAD to form NAD. Uses ammonia as a nitrogen source. This is NH(3)-dependent NAD(+) synthetase from Campylobacter jejuni subsp. doylei (strain ATCC BAA-1458 / RM4099 / 269.97).